The chain runs to 326 residues: D-alanine--D-alanine ligase (326 aa).

An ATP-grasp domain is found at 112–312 (KRIWRFEGLP…YENLCLGILA (201 aa)). 138 to 193 (LQALGAPMIVKPSREGSTIGLTKVWTAEECDQAYVLASRYDPEVLCEEFIEGDETT) serves as a coordination point for ATP. 3 residues coordinate Mg(2+): Asp-265, Glu-279, and Asn-281.

It belongs to the D-alanine--D-alanine ligase family. The cofactor is Mg(2+). Mn(2+) serves as cofactor.

It is found in the cytoplasm. It carries out the reaction 2 D-alanine + ATP = D-alanyl-D-alanine + ADP + phosphate + H(+). Its pathway is cell wall biogenesis; peptidoglycan biosynthesis. Its function is as follows. Cell wall formation. The polypeptide is D-alanine--D-alanine ligase (Delftia acidovorans (strain DSM 14801 / SPH-1)).